Reading from the N-terminus, the 352-residue chain is ER-derived vesicles protein ERV41 (352 aa).

At 1–23 the chain is on the cytoplasmic side; it reads MAGLKTFDAFPKTEEQYKKKSTK. Residues 24-44 traverse the membrane as a helical segment; sequence GGLTSLLTYLFLLFIAWTEFG. Residues 45 to 311 are Lumenal-facing; the sequence is EYFGGYIDQQ…FLVRLVAICS (267 aa). The chain crosses the membrane as a helical span at residues 312 to 332; sequence FLVYCASWIFTLLDMALITIM. Residues 333 to 352 are Cytoplasmic-facing; that stretch reads GPKWSLRYQPDDKTKGILDR. The Isoleucine-leucine motif signature appears at 349–350; it reads IL.

The protein belongs to the ERGIC family. Interacts with ERV46.

Its subcellular location is the endoplasmic reticulum membrane. The protein localises to the golgi apparatus membrane. It localises to the cytoplasmic vesicle. The protein resides in the COPII-coated vesicle membrane. Functionally, constituent of COPII-coated endoplasmic reticulum-derived transport vesicles. Required for efficient transport of a subset of secretory proteins to the Golgi. The C-terminal Ile-Leu motif is required for exit from the endoplasmic reticulum. Facilitates retrograde transport from the Golgi to the endoplasmic reticulum. This chain is ER-derived vesicles protein ERV41 (ERV41), found in Saccharomyces cerevisiae (strain ATCC 204508 / S288c) (Baker's yeast).